Consider the following 110-residue polypeptide: ATP-dependent Clp protease adapter protein ClpS (110 aa).

Belongs to the ClpS family. Binds to the N-terminal domain of the chaperone ClpA.

Involved in the modulation of the specificity of the ClpAP-mediated ATP-dependent protein degradation. The protein is ATP-dependent Clp protease adapter protein ClpS of Bartonella quintana (strain Toulouse) (Rochalimaea quintana).